Consider the following 150-residue polypeptide: UPF0735 ACT domain-containing protein Helmi_18680 (150 aa).

Positions 72 to 147 (SVSLLLEHHP…GVRSAQLVGS (76 aa)) constitute an ACT domain.

This sequence belongs to the UPF0735 family.

The chain is UPF0735 ACT domain-containing protein Helmi_18680 from Heliobacterium modesticaldum (strain ATCC 51547 / Ice1).